The chain runs to 454 residues: F-box protein At1g67130 (454 aa).

In terms of domain architecture, F-box spans 4–53 (GETLDSIPTDLILDILSRLPTKSIARFHCVSKLWSSMLASQDFTRLFVNR).

The polypeptide is F-box protein At1g67130 (Arabidopsis thaliana (Mouse-ear cress)).